The following is a 195-amino-acid chain: Pyridoxal 5'-phosphate synthase subunit PdxT (195 aa).

Residue Gly-46–Ser-48 participates in L-glutamine binding. Cys-78 serves as the catalytic Nucleophile. L-glutamine is bound by residues Arg-105 and Ile-133–Arg-134. Residues His-169 and Glu-171 each act as charge relay system in the active site.

Belongs to the glutaminase PdxT/SNO family. In the presence of PdxS, forms a dodecamer of heterodimers. Only shows activity in the heterodimer.

The enzyme catalyses aldehydo-D-ribose 5-phosphate + D-glyceraldehyde 3-phosphate + L-glutamine = pyridoxal 5'-phosphate + L-glutamate + phosphate + 3 H2O + H(+). The catalysed reaction is L-glutamine + H2O = L-glutamate + NH4(+). It participates in cofactor biosynthesis; pyridoxal 5'-phosphate biosynthesis. Functionally, catalyzes the hydrolysis of glutamine to glutamate and ammonia as part of the biosynthesis of pyridoxal 5'-phosphate. The resulting ammonia molecule is channeled to the active site of PdxS. This chain is Pyridoxal 5'-phosphate synthase subunit PdxT, found in Geobacillus thermodenitrificans (strain NG80-2).